Here is a 353-residue protein sequence, read N- to C-terminus: Photosystem II D2 protein (353 aa).

Threonine 2 is modified (N-acetylthreonine). At threonine 2 the chain carries Phosphothreonine. Residues 41–61 (CAYFSLGGWLTGTTFVTSWYT) traverse the membrane as a helical segment. Histidine 118 provides a ligand contact to chlorophyll a. Residues 125 to 141 (GFMLRQFELARSVQLRP) form a helical membrane-spanning segment. Glutamine 130 and asparagine 143 together coordinate pheophytin a. Residues 153 to 166 (VFVSVFLIYPLGQS) traverse the membrane as a helical segment. Histidine 198 serves as a coordination point for chlorophyll a. A helical transmembrane segment spans residues 208 to 228 (AALLCAIHGATVENTLFEDGD). 2 residues coordinate a plastoquinone: histidine 215 and phenylalanine 262. A Fe cation-binding site is contributed by histidine 215. Residue histidine 269 participates in Fe cation binding. Residues 279–295 (GLWMSAIGVVGLALNLR) form a helical membrane-spanning segment.

It belongs to the reaction center PufL/M/PsbA/D family. PSII is composed of 1 copy each of membrane proteins PsbA, PsbB, PsbC, PsbD, PsbE, PsbF, PsbH, PsbI, PsbJ, PsbK, PsbL, PsbM, PsbT, PsbX, PsbY, PsbZ, Psb30/Ycf12, at least 3 peripheral proteins of the oxygen-evolving complex and a large number of cofactors. It forms dimeric complexes. Requires The D1/D2 heterodimer binds P680, chlorophylls that are the primary electron donor of PSII, and subsequent electron acceptors. It shares a non-heme iron and each subunit binds pheophytin, quinone, additional chlorophylls, carotenoids and lipids. There is also a Cl(-1) ion associated with D1 and D2, which is required for oxygen evolution. The PSII complex binds additional chlorophylls, carotenoids and specific lipids. as cofactor.

Its subcellular location is the plastid. It is found in the chloroplast thylakoid membrane. The catalysed reaction is 2 a plastoquinone + 4 hnu + 2 H2O = 2 a plastoquinol + O2. In terms of biological role, photosystem II (PSII) is a light-driven water:plastoquinone oxidoreductase that uses light energy to abstract electrons from H(2)O, generating O(2) and a proton gradient subsequently used for ATP formation. It consists of a core antenna complex that captures photons, and an electron transfer chain that converts photonic excitation into a charge separation. The D1/D2 (PsbA/PsbD) reaction center heterodimer binds P680, the primary electron donor of PSII as well as several subsequent electron acceptors. D2 is needed for assembly of a stable PSII complex. The polypeptide is Photosystem II D2 protein (Chara vulgaris (Common stonewort)).